A 385-amino-acid polypeptide reads, in one-letter code: 1-deoxy-D-xylulose 5-phosphate reductoisomerase (385 aa).

Residues threonine 10, glycine 11, serine 12, isoleucine 13, lysine 37, and asparagine 124 each contribute to the NADPH site. 1-deoxy-D-xylulose 5-phosphate is bound at residue lysine 125. Glutamate 126 contacts NADPH. Aspartate 150 contacts Mn(2+). Serine 151, glutamate 152, serine 176, and histidine 199 together coordinate 1-deoxy-D-xylulose 5-phosphate. Glutamate 152 is a binding site for Mn(2+). NADPH is bound at residue glycine 205. 1-deoxy-D-xylulose 5-phosphate is bound by residues serine 212, asparagine 217, lysine 218, and glutamate 221. Glutamate 221 is a binding site for Mn(2+).

The protein belongs to the DXR family. It depends on Mg(2+) as a cofactor. Mn(2+) serves as cofactor.

It carries out the reaction 2-C-methyl-D-erythritol 4-phosphate + NADP(+) = 1-deoxy-D-xylulose 5-phosphate + NADPH + H(+). It functions in the pathway isoprenoid biosynthesis; isopentenyl diphosphate biosynthesis via DXP pathway; isopentenyl diphosphate from 1-deoxy-D-xylulose 5-phosphate: step 1/6. Its function is as follows. Catalyzes the NADPH-dependent rearrangement and reduction of 1-deoxy-D-xylulose-5-phosphate (DXP) to 2-C-methyl-D-erythritol 4-phosphate (MEP). This Clostridium botulinum (strain Loch Maree / Type A3) protein is 1-deoxy-D-xylulose 5-phosphate reductoisomerase.